Here is a 210-residue protein sequence, read N- to C-terminus: Putative polysaccharide-binding protein (210 aa).

A signal peptide spans 1 to 22 (MGFLKGTAAALTLLSAAAAASA). CBM1 domains lie at 23 to 62 (CGVL…AMPG), 63 to 105 (MMGQ…LANK), 125 to 165 (CGKE…APPP), and 166 to 210 (KMGE…PMHP).

The protein is Putative polysaccharide-binding protein of Porphyra purpurea (Red seaweed).